A 331-amino-acid chain; its full sequence is tRNA(Ile)-lysidine synthase (331 aa).

Residue 29–34 (SGGPDS) participates in ATP binding.

This sequence belongs to the tRNA(Ile)-lysidine synthase family.

Its subcellular location is the cytoplasm. It catalyses the reaction cytidine(34) in tRNA(Ile2) + L-lysine + ATP = lysidine(34) in tRNA(Ile2) + AMP + diphosphate + H(+). Functionally, ligates lysine onto the cytidine present at position 34 of the AUA codon-specific tRNA(Ile) that contains the anticodon CAU, in an ATP-dependent manner. Cytidine is converted to lysidine, thus changing the amino acid specificity of the tRNA from methionine to isoleucine. The polypeptide is tRNA(Ile)-lysidine synthase (Chlorobaculum tepidum (strain ATCC 49652 / DSM 12025 / NBRC 103806 / TLS) (Chlorobium tepidum)).